The following is a 156-amino-acid chain: Probable histone H2A.6 (156 aa).

Disordered regions lie at residues 1-26 (MDVG…KKPV) and 129-156 (KKTA…QARS). Over residues 9 to 26 (AAKKAVGRKLGGPKKKPV) the composition is skewed to basic residues. Residues 130–147 (KTAEKADKPAKASKDKAA) are compositionally biased toward basic and acidic residues. The SPKK motif motif lies at 149 to 152 (SPKK).

The protein belongs to the histone H2A family. In terms of assembly, the nucleosome is a histone octamer containing two molecules each of H2A, H2B, H3 and H4 assembled in one H3-H4 heterotetramer and two H2A-H2B heterodimers. The octamer wraps approximately 147 bp of DNA.

It localises to the nucleus. Its subcellular location is the chromosome. Core component of nucleosome. Nucleosomes wrap and compact DNA into chromatin, limiting DNA accessibility to the cellular machineries which require DNA as a template. Histones thereby play a central role in transcription regulation, DNA repair, DNA replication and chromosomal stability. DNA accessibility is regulated via a complex set of post-translational modifications of histones, also called histone code, and nucleosome remodeling. In Oryza sativa subsp. indica (Rice), this protein is Probable histone H2A.6.